The chain runs to 150 residues: uncharacterized protein (150 aa).

This is an uncharacterized protein from Acidianus bottle-shaped virus (isolate Italy/Pozzuoli) (ABV).